Reading from the N-terminus, the 414-residue chain is Gamma-glutamyl phosphate reductase (414 aa).

This sequence belongs to the gamma-glutamyl phosphate reductase family.

It is found in the cytoplasm. It carries out the reaction L-glutamate 5-semialdehyde + phosphate + NADP(+) = L-glutamyl 5-phosphate + NADPH + H(+). The protein operates within amino-acid biosynthesis; L-proline biosynthesis; L-glutamate 5-semialdehyde from L-glutamate: step 2/2. Its function is as follows. Catalyzes the NADPH-dependent reduction of L-glutamate 5-phosphate into L-glutamate 5-semialdehyde and phosphate. The product spontaneously undergoes cyclization to form 1-pyrroline-5-carboxylate. The chain is Gamma-glutamyl phosphate reductase from Kosmotoga olearia (strain ATCC BAA-1733 / DSM 21960 / TBF 19.5.1).